Reading from the N-terminus, the 355-residue chain is Methionine import ATP-binding protein MetN 1 (355 aa).

Residues 6-245 enclose the ABC transporter domain; the sequence is IDLKDIAVTF…PKAPLTVDFV (240 aa). Residue 42–49 coordinates ATP; it reads GYSGAGKS.

Belongs to the ABC transporter superfamily. Methionine importer (TC 3.A.1.24) family. In terms of assembly, the complex is composed of two ATP-binding proteins (MetN), two transmembrane proteins (MetI) and a solute-binding protein (MetQ).

The protein resides in the cell membrane. It carries out the reaction L-methionine(out) + ATP + H2O = L-methionine(in) + ADP + phosphate + H(+). The enzyme catalyses D-methionine(out) + ATP + H2O = D-methionine(in) + ADP + phosphate + H(+). Its function is as follows. Part of the ABC transporter complex MetNIQ involved in methionine import. Responsible for energy coupling to the transport system. The polypeptide is Methionine import ATP-binding protein MetN 1 (Lactiplantibacillus plantarum (strain ATCC BAA-793 / NCIMB 8826 / WCFS1) (Lactobacillus plantarum)).